A 227-amino-acid polypeptide reads, in one-letter code: MGAVMGTFSSLQTKQRRPSKDIAWWYYQYQRDKIEDDLEMTMVCHRPEGLEQLEAQTNFTKRELQVLYRGFKNECPSGVVNEETFKQIYAQFFPHGDASTYAHYLFNAFDTTQTGSVKFEDFVTALSILLRGTVHEKLRWTFNLYDINKDGYINKEEMMDIVKAIYDMMGKYTYPVLKEDTPRQHVDVFFQKMDKNKDGIVTLDEFLESCQEDDNIMRSLQLFQNVM.

Positions 38-94 constitute an EF-hand 1; degenerate domain; the sequence is LEMTMVCHRPEGLEQLEAQTNFTKRELQVLYRGFKNECPSGVVNEETFKQIYAQFFP. EF-hand domains follow at residues 97–132, 133–168, and 181–216; these read DASTYAHYLFNAFDTTQTGSVKFEDFVTALSILLRG, TVHEKLRWTFNLYDINKDGYINKEEMMDIVKAIYDM, and TPRQHVDVFFQKMDKNKDGIVTLDEFLESCQEDDNI. D146, N148, D150, Y152, E157, D194, N196, D198, and E205 together coordinate Ca(2+). The tract at residues 214–227 is interaction with KCND2; that stretch reads DNIMRSLQLFQNVM.

The protein belongs to the recoverin family. In terms of assembly, component of heteromultimeric potassium channels. Identified in potassium channel complexes containing KCND1, KCND2, KCND3, KCNIP1, KCNIP2, KCNIP3, KCNIP4, DPP6 and DPP10. Part of a heterooctamer composed of the tetrameric channel and four KCNIP1 chains. Probably part of a complex consisting of KCNIP1, KCNIP2 isoform 3 and KCND2. Self-associates to form homodimers and homotetramers. Interacts with KCNIP2 isoform 3 in a calcium-dependent manner. Interacts with KCND2; this interaction mediates the capture of both the N- and C-terminus of KCND2, thus preventing KCND2 N-type inactivation and modulates the channel gating kinetics. Interacts with KCND3; each KCNIP1 monomer interacts with two adjacent KCND3 subunits, through both the N-terminal inactivation ball of a KCND3 subunit and a C-terminal helix from the adjacent KCND3 subunit, clamping them together; this interaction stabilizes the tetrameric form and modulates the channel gating kinetics namely channel activation and inactivation kinetics and rate of recovery from inactivation. Detected in hippocampus and in the molecular layer of the dentate gyrus (at protein level). Isoform 1 and isoform 2 are predominantly expressed at equal levels in brain. Colocalizes with KCND3 in inhibitory interneurons in cortex and hippocampus and in striatal interneurons.

The protein localises to the cell membrane. It is found in the cytoplasm. The protein resides in the cell projection. Its subcellular location is the dendrite. In terms of biological role, regulatory subunit of Kv4/D (Shal)-type voltage-gated rapidly inactivating A-type potassium channels. Regulates channel density, inactivation kinetics and rate of recovery from inactivation in a calcium-dependent and isoform-specific manner. Modulates KCND2/Kv4.2 currents. In vitro, modulates KCND1/Kv4.1 currents. Increases the presence of KCND2 at the cell surface. The chain is A-type potassium channel modulatory protein KCNIP1 from Rattus norvegicus (Rat).